A 401-amino-acid polypeptide reads, in one-letter code: uncharacterized protein (401 aa).

Residue K242 is modified to N6-(pyridoxal phosphate)lysine.

The protein belongs to the class-I pyridoxal-phosphate-dependent aminotransferase family. In terms of assembly, homodimer. Pyridoxal 5'-phosphate serves as cofactor.

It is found in the cytoplasm. This is an uncharacterized protein from Saccharolobus solfataricus (strain ATCC 35092 / DSM 1617 / JCM 11322 / P2) (Sulfolobus solfataricus).